A 325-amino-acid chain; its full sequence is D-alanine--D-alanine ligase (325 aa).

In terms of domain architecture, ATP-grasp spans 107 to 311; it reads KRLLLSESLP…YEALCVEVLK (205 aa). ATP is bound at residue 137–192; that stretch reads VDTLGLPLIVKPAREGSSLGLSKVTERAAMAAAVALAEKMDADILCEQFISGDEVT. The Mg(2+) site is built by aspartate 264, glutamate 278, and asparagine 280.

It belongs to the D-alanine--D-alanine ligase family. Requires Mg(2+) as cofactor. Mn(2+) serves as cofactor.

The protein resides in the cytoplasm. It carries out the reaction 2 D-alanine + ATP = D-alanyl-D-alanine + ADP + phosphate + H(+). It functions in the pathway cell wall biogenesis; peptidoglycan biosynthesis. Functionally, cell wall formation. The protein is D-alanine--D-alanine ligase of Polaromonas naphthalenivorans (strain CJ2).